Here is a 957-residue protein sequence, read N- to C-terminus: Collagen alpha-1(XXI) chain (957 aa).

A signal peptide spans 1–16 (MPGIIYILCSILLIES). In terms of domain architecture, VWFA spans 37–211 (DLVFILDGSW…RIREIMKQKL (175 aa)). In terms of domain architecture, Laminin G-like spans 230-412 (GFDILLGLGI…LQKLRIYCDP (183 aa)). Disordered regions lie at residues 441 to 788 (PAPC…GKEQ) and 820 to 935 (CKTQ…DAGI). Collagen-like domains follow at residues 448 to 501 (PGEK…PRGF), 502 to 543 (AGLK…DKGD), 544 to 591 (IGID…EEGK), 592 to 642 (PGPP…ISGP), 643 to 684 (EGIS…IPGQ), 685 to 741 (QGYT…EIGE), 742 to 786 (HGHR…QQGK), and 825 to 882 (GSPG…GNKG). Residues 483–498 (TSGSPGIPGSPGVQGP) show a composition bias toward low complexity. The span at 535-556 (MGPKGDKGDIGIDGKKGTKGDK) shows a compositional bias: basic and acidic residues. Composition is skewed to low complexity over residues 597-616 (MEGL…DGAN) and 633-649 (PTGT…SGPQ). A compositionally biased stretch (basic and acidic residues) spans 733 to 744 (KGEKGEIGEHGH). The span at 775-786 (QGLPGPKGQQGK) shows a compositional bias: low complexity.

It belongs to the fibril-associated collagens with interrupted helices (FACIT) family.

It localises to the secreted. Its subcellular location is the extracellular space. It is found in the extracellular matrix. The protein resides in the cytoplasm. The polypeptide is Collagen alpha-1(XXI) chain (col21a1) (Xenopus laevis (African clawed frog)).